The following is a 363-amino-acid chain: Chorismate synthase (363 aa).

R48 and R54 together coordinate NADP(+). Residues 131–133, 244–245, G288, 303–307, and R329 each bind FMN; these read RSS, NA, and KPTSS.

It belongs to the chorismate synthase family. In terms of assembly, homotetramer. Requires FMNH2 as cofactor.

The enzyme catalyses 5-O-(1-carboxyvinyl)-3-phosphoshikimate = chorismate + phosphate. It functions in the pathway metabolic intermediate biosynthesis; chorismate biosynthesis; chorismate from D-erythrose 4-phosphate and phosphoenolpyruvate: step 7/7. Its function is as follows. Catalyzes the anti-1,4-elimination of the C-3 phosphate and the C-6 proR hydrogen from 5-enolpyruvylshikimate-3-phosphate (EPSP) to yield chorismate, which is the branch point compound that serves as the starting substrate for the three terminal pathways of aromatic amino acid biosynthesis. This reaction introduces a second double bond into the aromatic ring system. The polypeptide is Chorismate synthase (Maricaulis maris (strain MCS10) (Caulobacter maris)).